The following is a 324-amino-acid chain: Phospho-N-acetylmuramoyl-pentapeptide-transferase (324 aa).

Transmembrane regions (helical) follow at residues 5–25 (GLLVTAGVAFLISVALSPLFI), 52–72 (PTMGGIVIYVSMMVTSLIMAI), 77–97 (LGAEVSLLLLVTFGYGLIGFL), 122–142 (VIAIAFFLIGKGQAFHTYIMI), 149–169 (FELGWAYFVLVLFMLIGGSNA), 176–196 (LDGLLSGTAAIAFGAFSIIAV), 201–221 (FGVAIFCMAVVGAVLGFLVFN), 227–247 (VFMGDTGSLALGGAIAAVAIL), 253–273 (LLVIIGGVFVMETLSVIIQVI), and 302–322 (VVVTFWSVGFLLAVLGIYIGV).

It belongs to the glycosyltransferase 4 family. MraY subfamily. It depends on Mg(2+) as a cofactor.

The protein resides in the cell membrane. The catalysed reaction is UDP-N-acetyl-alpha-D-muramoyl-L-alanyl-gamma-D-glutamyl-meso-2,6-diaminopimeloyl-D-alanyl-D-alanine + di-trans,octa-cis-undecaprenyl phosphate = di-trans,octa-cis-undecaprenyl diphospho-N-acetyl-alpha-D-muramoyl-L-alanyl-D-glutamyl-meso-2,6-diaminopimeloyl-D-alanyl-D-alanine + UMP. Its pathway is cell wall biogenesis; peptidoglycan biosynthesis. Catalyzes the initial step of the lipid cycle reactions in the biosynthesis of the cell wall peptidoglycan: transfers peptidoglycan precursor phospho-MurNAc-pentapeptide from UDP-MurNAc-pentapeptide onto the lipid carrier undecaprenyl phosphate, yielding undecaprenyl-pyrophosphoryl-MurNAc-pentapeptide, known as lipid I. This Bacillus cereus (strain AH820) protein is Phospho-N-acetylmuramoyl-pentapeptide-transferase.